The following is an 88-amino-acid chain: Phosphocarrier protein HPr (88 aa).

The 88-residue stretch at methionine 1–isoleucine 88 folds into the HPr domain. Histidine 15 serves as the catalytic Pros-phosphohistidine intermediate. Position 47 is a phosphoserine; by HPrK/P (serine 47).

The protein belongs to the HPr family.

Its subcellular location is the cytoplasm. Its activity is regulated as follows. Phosphorylation on Ser-47 inhibits the phosphoryl transfer from enzyme I to HPr. Functionally, general (non sugar-specific) component of the phosphoenolpyruvate-dependent sugar phosphotransferase system (sugar PTS). This major carbohydrate active-transport system catalyzes the phosphorylation of incoming sugar substrates concomitantly with their translocation across the cell membrane. The phosphoryl group from phosphoenolpyruvate (PEP) is transferred to the phosphoryl carrier protein HPr by enzyme I. Phospho-HPr then transfers it to the PTS EIIA domain. Its function is as follows. P-Ser-HPr interacts with the catabolite control protein A (CcpA), forming a complex that binds to DNA at the catabolite response elements cre, operator sites preceding a large number of catabolite-regulated genes. Thus, P-Ser-HPr is a corepressor in carbon catabolite repression (CCR), a mechanism that allows bacteria to coordinate and optimize the utilization of available carbon sources. P-Ser-HPr also plays a role in inducer exclusion, in which it probably interacts with several non-PTS permeases and inhibits their transport activity. This is Phosphocarrier protein HPr (ptsH) from Mycoplasma pneumoniae (strain ATCC 29342 / M129 / Subtype 1) (Mycoplasmoides pneumoniae).